The sequence spans 265 residues: Deoxycytidine kinase 2 (265 aa).

31–39 (GNIAAGKST) contributes to the ATP binding site. Substrate-binding residues include E56, Y89, and Q100. E130 functions as the Proton acceptor in the catalytic mechanism. Substrate is bound by residues R131 and D136. 191 to 195 (RLQKR) serves as a coordination point for ATP. Position 200 (E200) interacts with substrate. 243 to 245 (EDF) contributes to the ATP binding site.

It belongs to the DCK/DGK family. In terms of assembly, homodimer. In terms of tissue distribution, expressed at high levels in adult intestine, spleen, thymus and testis with lower levels in skeletal muscle and eye. In the embryo, expressed at higher levels until day 10 with lower levels in later stages.

It localises to the nucleus. It catalyses the reaction 2'-deoxycytidine + a ribonucleoside 5'-triphosphate = dCMP + a ribonucleoside 5'-diphosphate + H(+). The catalysed reaction is 2'-deoxyguanosine + ATP = dGMP + ADP + H(+). The enzyme catalyses 2'-deoxyadenosine + ATP = dAMP + ADP + H(+). Phosphorylates the deoxyribonucleosides deoxyadenosine, deoxycytidine and deoxyguanosine. Shows highest activity against deoxyguanosine followed by deoxycytidine and then deoxyadenosine. Shows only very minor activity against deoxyuridine and deoxythymidine. In Gallus gallus (Chicken), this protein is Deoxycytidine kinase 2.